The sequence spans 469 residues: Reticulon-2 (469 aa).

Disordered regions lie at residues 1–180 (MGQV…EASE) and 201–238 (LTPQ…NGEG). The span at 14–25 (APSTASSTPDST) shows a compositional bias: low complexity. Positions 32-43 (SDFRELHTAREF) are enriched in basic and acidic residues. Ser-44 carries the phosphoserine modification. The segment covering 135–144 (RPLEELRLRL) has biased composition (basic and acidic residues). Composition is skewed to polar residues over residues 159–168 (DSATSSSTPL) and 203–226 (PQLS…QDLN). Positions 270 to 469 (VADLLYWKDT…SVSGSKAKAE (200 aa)) constitute a Reticulon domain. The next 2 membrane-spanning stretches (helical) occupy residues 293 to 313 (LLCL…LLGL) and 388 to 408 (LLFY…LVIL).

As to quaternary structure, interacts with SPAST. Interacts with BACE1. Interacts (via first transmembrane domain) with ARL6IP5/GTRAP3-18. Interacts (via N-terminus) with SLC1A1/EAAC1; the interaction promotes cell surface expression of SLC1A1. Expressed in brain and spinal cord (at protein level). In the embryonic brain cortex, expressed in neurons but not in astrocytes (at protein level).

Its subcellular location is the endoplasmic reticulum membrane. It localises to the sarcoplasmic reticulum membrane. The protein localises to the cell membrane. It is found in the sarcolemma. The protein resides in the T-tubule. Its subcellular location is the cytoplasm. It localises to the myofibril. The protein localises to the sarcomere. It is found in the z line. The protein resides in the cytoskeleton. In terms of biological role, inhibits amyloid precursor protein processing, probably by blocking BACE1 activity. Enhances trafficking of the glutamate transporter SLC1A1/EAAC1 from the endoplasmic reticulum to the cell surface. Plays a role in the translocation of SLC2A4/GLUT4 from intracellular membranes to the cell membrane which facilitates the uptake of glucose into the cell. This is Reticulon-2 from Rattus norvegicus (Rat).